Consider the following 306-residue polypeptide: Glutathione transport system permease protein GsiC (306 aa).

The Cytoplasmic portion of the chain corresponds to 1 to 8 (MLNYVLKR). Residues 9–29 (LLGLIPTLLIVAVLVFLFVHL) traverse the membrane as a helical segment. The Periplasmic portion of the chain corresponds to 30 to 102 (LPGDPARLIA…SRFLPTLWLT (73 aa)). Positions 95 to 292 (FLPTLWLTIT…LEFILINLVV (198 aa)) constitute an ABC transmembrane type-1 domain. Residues 103–123 (ITSMIWAVLFGMAIGIAAAVW) traverse the membrane as a helical segment. Topologically, residues 124-134 (RNRWPDRLGMT) are cytoplasmic. Residues 135 to 155 (LAVTGISFPAFALGMLLMQIF) form a helical membrane-spanning segment. Residues 156–168 (SVDLGWLPTVGAD) lie on the Periplasmic side of the membrane. Residues 169-189 (SWQHYILPSLTLGAAVASVMA) form a helical membrane-spanning segment. Residues 190–228 (RFTRSSFVDVLSEDYMRTARAKGVSETWVVLKHGLRNAM) are Cytoplasmic-facing. The helical transmembrane segment at 229–249 (IPVVTMMGLQFGFLLGGSIVV) threads the bilayer. The Periplasmic segment spans residues 250–278 (EKVFNWPGLGRLLVDSVDMRDYPVIQAEV). A helical transmembrane segment spans residues 279–299 (LLFSLEFILINLVVDVLYAAI). Residues 300–306 (NPAIRYK) are Cytoplasmic-facing.

The protein belongs to the binding-protein-dependent transport system permease family. The complex is composed of two ATP-binding proteins (GsiA), two transmembrane proteins (GsiC and GsiD) and a solute-binding protein (GsiB).

Its subcellular location is the cell inner membrane. In terms of biological role, part of the ABC transporter complex GsiABCD involved in glutathione import. Probably responsible for the translocation of the substrate across the membrane. This chain is Glutathione transport system permease protein GsiC, found in Salmonella paratyphi A (strain ATCC 9150 / SARB42).